Consider the following 135-residue polypeptide: Phosphomevalonate dehydratase small subunit (135 aa).

The active-site Proton acceptor is serine 67.

It belongs to the AcnX type II small subunit family. As to quaternary structure, heterodimer composed of a large subunit (PMDh-L) and a small subunit (PMDh-S).

The enzyme catalyses (R)-5-phosphomevalonate = (2E)-3-methyl-5-phosphooxypent-2-enoate + H2O. It functions in the pathway isoprenoid biosynthesis; isopentenyl diphosphate biosynthesis via mevalonate pathway. Component of a hydro-lyase that catalyzes the dehydration of mevalonate 5-phosphate (MVA5P) to form trans-anhydromevalonate 5-phosphate (tAHMP). Involved in the archaeal mevalonate (MVA) pathway, which provides fundamental precursors for isoprenoid biosynthesis, such as isopentenyl diphosphate (IPP) and dimethylallyl diphosphate (DMAPP). The polypeptide is Phosphomevalonate dehydratase small subunit (Methanopyrus kandleri (strain AV19 / DSM 6324 / JCM 9639 / NBRC 100938)).